The chain runs to 177 residues: Protein FATTY ACID EXPORT 4, chloroplastic (177 aa).

The N-terminal 63 residues, 1–63 (MWSLALTLPS…AELSELAPVV (63 aa)), are a transit peptide targeting the chloroplast. Transmembrane regions (helical) follow at residues 85-105 (KGSLFGGLTGSVLMASAYFLT), 111-131 (RVLGDTIGLGAAFLFSSVFGF), and 140-160 (VPAGPLLLLSIGMLSFFVMAY).

It belongs to the TMEM14 family.

It is found in the plastid. It localises to the chloroplast membrane. May be involved in free fatty acids export from the plastids. This chain is Protein FATTY ACID EXPORT 4, chloroplastic, found in Arabidopsis thaliana (Mouse-ear cress).